Reading from the N-terminus, the 222-residue chain is Cysteine protease inhibitor 1 (222 aa).

A signal peptide spans 1-26 (MKSINILSFLLLSSTLSLVAFARSFT). Residues 27 to 42 (SENPIVLPTTCHDDDN) constitute a propeptide that is removed on maturation. A Vacuolar targeting signal motif is present at residues 29–34 (NPIVLP). 2 disulfides stabilise this stretch: Cys84–Cys136 and Cys185–Cys191.

Belongs to the protease inhibitor I3 (leguminous Kunitz-type inhibitor) family. Tubers, leaves.

It localises to the vacuole. Potent inhibitor of cathepsin l (cysteine protease). Does not inhibit trypsin or chymotrypsin (serine proteases). May protect the plant by inhibiting proteases of invading organisms. The sequence is that of Cysteine protease inhibitor 1 from Solanum tuberosum (Potato).